Reading from the N-terminus, the 397-residue chain is Elongation factor Tu (397 aa).

Residues 10–207 enclose the tr-type G domain; that stretch reads LPHVNVGTIG…TLDSYIPEPV (198 aa). The G1 stretch occupies residues 19 to 26; that stretch reads GHVDHGKT. 19–26 contributes to the GTP binding site; sequence GHVDHGKT. Thr26 serves as a coordination point for Mg(2+). The tract at residues 60 to 64 is G2; it reads GITIN. Residues 81–84 are G3; sequence DCPG. GTP contacts are provided by residues 81–85 and 136–139; these read DCPGH and NKAD. Positions 136–139 are G4; it reads NKAD. The tract at residues 174 to 176 is G5; it reads SAR.

This sequence belongs to the TRAFAC class translation factor GTPase superfamily. Classic translation factor GTPase family. EF-Tu/EF-1A subfamily. Monomer.

It localises to the cytoplasm. It carries out the reaction GTP + H2O = GDP + phosphate + H(+). GTP hydrolase that promotes the GTP-dependent binding of aminoacyl-tRNA to the A-site of ribosomes during protein biosynthesis. The polypeptide is Elongation factor Tu (Pseudomonas syringae pv. syringae (strain B728a)).